The following is a 333-amino-acid chain: Protein VTE6, chloroplastic (333 aa).

Residues 1–65 constitute a chloroplast transit peptide; that stretch reads MATISSTLLL…SRADGATAAA (65 aa). 6 helical membrane-spanning segments follow: residues 94-114, 126-146, 171-191, 248-268, 274-294, and 307-327; these read LLIF…SGIA, AYGS…TAAT, VIGS…QVGG, TLAG…LGQI, AVCV…GASF, and VVNV…QQFI.

The protein belongs to the TMEM19 family.

It is found in the plastid. The protein resides in the chloroplast membrane. The catalysed reaction is phytyl phosphate + a ribonucleoside 5'-triphosphate = phytyl diphosphate + a ribonucleoside 5'-diphosphate. It carries out the reaction phytyl phosphate + CTP = phytyl diphosphate + CDP. Its pathway is cofactor biosynthesis; tocopherol biosynthesis. Functionally, phytyl-phosphate kinase catalyzing the conversion of phytyl-monophosphate to phytyl-diphosphate. Involved in the activation and reutilization of phytol from chlorophyll degradation in plant metabolism, including tocopherol (vitamin E) biosynthesis. Involved in the biosynthesis of phylloquinone (vitamin K), which is required for the photosystem I (PSI) complex stability. This Arabidopsis thaliana (Mouse-ear cress) protein is Protein VTE6, chloroplastic.